The chain runs to 427 residues: Glutamate-1-semialdehyde 2,1-aminomutase 2 (427 aa).

Position 267 is an N6-(pyridoxal phosphate)lysine (Lys-267).

This sequence belongs to the class-III pyridoxal-phosphate-dependent aminotransferase family. HemL subfamily. As to quaternary structure, homodimer. Requires pyridoxal 5'-phosphate as cofactor.

The protein resides in the cytoplasm. The catalysed reaction is (S)-4-amino-5-oxopentanoate = 5-aminolevulinate. The protein operates within porphyrin-containing compound metabolism; protoporphyrin-IX biosynthesis; 5-aminolevulinate from L-glutamyl-tRNA(Glu): step 2/2. The chain is Glutamate-1-semialdehyde 2,1-aminomutase 2 from Staphylococcus saprophyticus subsp. saprophyticus (strain ATCC 15305 / DSM 20229 / NCIMB 8711 / NCTC 7292 / S-41).